Here is a 377-residue protein sequence, read N- to C-terminus: Mitochondrial pyrimidine nucleotide transporter RIM2 (377 aa).

Solcar repeat units follow at residues 50–163 (VKPW…TKDM), 173–262 (ETPM…MKRL), and 286–375 (KEWC…VIRL). 6 helical membrane passes run 53–73 (WVHF…TCPF), 131–151 (GFRS…PARS), 179–199 (LMAA…IWLI), 238–258 (GLSA…LYEQ), 286–306 (KEWC…SIAT), and 347–368 (MYSG…MFGT).

The protein belongs to the mitochondrial carrier (TC 2.A.29) family.

It is found in the mitochondrion inner membrane. The enzyme catalyses 5-methyl-UTP(out) + UTP(in) = 5-methyl-UTP(in) + UTP(out). Its function is as follows. Mitochondrial transporter that imports/exports pyrimidine nucleotides into and from mitochondria. Selectively transports uridine, thymidine, and cytosine (deoxy)nucleoside di- and triphosphates by an antiport mechanism. Also transports, with lower efficiency, uridine, thymidine, and cytosine (deoxy)nucleoside monophosphates as well as guanosine (deoxy)nucleoside di- and triphosphate. May import (deoxy)nucleoside triphosphates in exchange for intramitochondrial (deoxy)nucleoside monophosphates, thus providing precursors necessary for de novo synthesis of mitochondrial DNA and RNA while exporting products of their catabolism. Mediates the transport of iron and other divalent metal ions like copper and zinc across the mitochondrial inner membrane in a pyrimidine nucleotide-dependent fashion. Catalyzes the co-import of pyrimidine nucleotides and divalent metal ions including ferrous iron. Participates in mitochondrial genome maintenance, regulation of mitochondrial membrane potential and mitochondrial respiration. This chain is Mitochondrial pyrimidine nucleotide transporter RIM2 (RIM2), found in Saccharomyces cerevisiae (strain ATCC 204508 / S288c) (Baker's yeast).